Reading from the N-terminus, the 976-residue chain is Mast/stem cell growth factor receptor Kit (976 aa).

Positions 1–25 (MRGARGAWDFLCVLLLLLRVQTGSS) are cleaved as a signal peptide. At 26–524 (QPSVSPGEPS…QIHPHTLFTP (499 aa)) the chain is on the extracellular side. Ig-like C2-type domains are found at residues 27-112 (PSVS…VFVR), 121-205 (DRSL…LKVR), 212-308 (PVVS…LEVV), 317-410 (PMIN…VYVN), and 413-507 (PEIL…FNFA). A disulfide bridge links Cys58 with Cys97. Residues Asn130 and Asn145 are each glycosylated (N-linked (GlcNAc...) asparagine). 3 disulfide bridges follow: Cys136–Cys186, Cys151–Cys183, and Cys233–Cys290. N-linked (GlcNAc...) asparagine glycosylation is found at Asn283, Asn293, Asn300, Asn320, Asn352, Asn367, Asn463, and Asn486. A disulfide bridge connects residues Cys428 and Cys491. The helical transmembrane segment at 525–545 (LLIGFVIVAGMMCIIVMILTY) threads the bilayer. The Cytoplasmic segment spans residues 546 to 976 (KYLQKPMYEV…SQPLLVHDDV (431 aa)). A phosphotyrosine; by autocatalysis mark is found at Tyr547, Tyr553, Tyr568, and Tyr570. Tyr568 lines the Mg(2+) pocket. The interval 568 to 570 (YVY) is important for interaction with phosphotyrosine-binding proteins. The Protein kinase domain occupies 589-937 (LSFGKTLGAG…ISESTNHIYS (349 aa)). ATP is bound by residues 596–603 (GAGAFGKV), Lys623, and 671–677 (EYCCYGD). Phosphotyrosine; by autocatalysis occurs at positions 703, 721, and 730. A phosphoserine; by PKC/PRKCA mark is found at Ser741 and Ser746. Asp792 acts as the Proton acceptor in catalysis. An ATP-binding site is contributed by Arg796. The Mg(2+) site is built by Asn797 and Asp810. Phosphoserine is present on Ser821. Tyr823 is subject to Phosphotyrosine; by autocatalysis. Ser891 carries the post-translational modification Phosphoserine. Residues Tyr900 and Tyr936 each carry the phosphotyrosine; by autocatalysis modification. A Phosphoserine modification is found at Ser959.

Belongs to the protein kinase superfamily. Tyr protein kinase family. CSF-1/PDGF receptor subfamily. Monomer in the absence of bound KITLG/SCF. Homodimer in the presence of bound KITLG/SCF, forming a heterotetramer with two KITLG/SCF molecules. Interacts (via phosphorylated tyrosine residues) with the adapter proteins GRB2 and GRB7 (via SH2 domain), and SH2B2/APS. Interacts (via C-terminus) with MPDZ (via the tenth PDZ domain). Interacts (via phosphorylated tyrosine residues) with PIK3R1 and PIK3 catalytic subunit. Interacts (via phosphorylated tyrosine) with CRK (isoform Crk-II), FYN, SHC1 and MATK/CHK (via SH2 domain). Interacts with LYN and FES/FPS. Interacts (via phosphorylated tyrosine residues) with the protein phosphatases PTPN6/SHP-1 (via SH2 domain), PTPN11/SHP-2 (via SH2 domain) and PTPRU. Interacts with PLCG1. Interacts with DOK1 and TEC. Interacts (KITLG/SCF-bound) with IL1RL1. Interacts with IL1RAP (independent of stimulation with KITLG/SCF). A mast cell-specific KITLG/SCF-induced interleukin-33 signaling complex contains IL1RL1, IL1RAP, KIT and MYD88. Post-translationally, ubiquitinated by SOCS6. KIT is rapidly ubiquitinated after autophosphorylation induced by KITLG/SCF binding, leading to internalization and degradation. In terms of processing, autophosphorylated on tyrosine residues. KITLG/SCF binding enhances autophosphorylation. Isoform 1 shows low levels of tyrosine phosphorylation in the absence of added KITLG/SCF (in vitro). Kinase activity is down-regulated by phosphorylation on serine residues by protein kinase C family members. Phosphorylation at Tyr-568 is required for interaction with PTPN11/SHP-2, CRK (isoform Crk-II) and members of the SRC tyrosine-protein kinase family. Phosphorylation at Tyr-570 is required for interaction with PTPN6/SHP-1. Phosphorylation at Tyr-703, Tyr-823 and Tyr-936 is important for interaction with GRB2. Phosphorylation at Tyr-721 is important for interaction with PIK3R1. Phosphorylation at Tyr-823 and Tyr-936 is important for interaction with GRB7. In terms of tissue distribution, in testis, detected in spermatogonia in the basal layer and in interstitial Leydig cells but not in Sertoli cells or spermatocytes inside the seminiferous tubules (at protein level). Expression is maintained in ejaculated spermatozoa (at protein level).

The protein localises to the cell membrane. Its subcellular location is the cytoplasm. The catalysed reaction is L-tyrosyl-[protein] + ATP = O-phospho-L-tyrosyl-[protein] + ADP + H(+). With respect to regulation, present in an inactive conformation in the absence of bound ligand. KITLG/SCF binding leads to dimerization and activation by autophosphorylation on tyrosine residues. Activity is down-regulated by PRKCA-mediated phosphorylation on serine residues. Inhibited by imatinib/STI-571 (Gleevec) and sunitinib; these compounds maintain the kinase in an inactive conformation. Tyrosine-protein kinase that acts as a cell-surface receptor for the cytokine KITLG/SCF and plays an essential role in the regulation of cell survival and proliferation, hematopoiesis, stem cell maintenance, gametogenesis, mast cell development, migration and function, and in melanogenesis. In response to KITLG/SCF binding, KIT can activate several signaling pathways. Phosphorylates PIK3R1, PLCG1, SH2B2/APS and CBL. Activates the AKT1 signaling pathway by phosphorylation of PIK3R1, the regulatory subunit of phosphatidylinositol 3-kinase. Activated KIT also transmits signals via GRB2 and activation of RAS, RAF1 and the MAP kinases MAPK1/ERK2 and/or MAPK3/ERK1. Promotes activation of STAT family members STAT1, STAT3, STAT5A and STAT5B. Activation of PLCG1 leads to the production of the cellular signaling molecules diacylglycerol and inositol 1,4,5-trisphosphate. KIT signaling is modulated by protein phosphatases, and by rapid internalization and degradation of the receptor. Activated KIT promotes phosphorylation of the protein phosphatases PTPN6/SHP-1 and PTPRU, and of the transcription factors STAT1, STAT3, STAT5A and STAT5B. Promotes phosphorylation of PIK3R1, CBL, CRK (isoform Crk-II), LYN, MAPK1/ERK2 and/or MAPK3/ERK1, PLCG1, SRC and SHC1. This Homo sapiens (Human) protein is Mast/stem cell growth factor receptor Kit (KIT).